A 474-amino-acid polypeptide reads, in one-letter code: Tumor necrosis factor receptor superfamily member 1B (474 aa).

The signal sequence occupies residues 1–22 (MAPAALWVALVVELQLWATGHT). The Extracellular segment spans residues 23–258 (VPAKVVLTPY…PIIEPSITGG (236 aa)). The O-linked (GalNAc...) threonine glycan is linked to threonine 30. TNFR-Cys repeat units lie at residues 39–77 (QCQI…TVCA), 78–119 (DCAA…NRVC), 120–164 (ACNA…VICS), and 165–203 (ACAP…AVCA). Cystine bridges form between cysteine 40-cysteine 54, cysteine 55-cysteine 68, cysteine 58-cysteine 76, cysteine 79-cysteine 94, cysteine 97-cysteine 111, cysteine 101-cysteine 119, cysteine 121-cysteine 127, cysteine 136-cysteine 145, cysteine 139-cysteine 163, and cysteine 166-cysteine 181. The N-linked (GlcNAc...) asparagine glycan is linked to asparagine 69. N-linked (GlcNAc...) asparagine glycosylation is present at asparagine 110. Asparagine 195 is a glycosylation site (N-linked (GlcNAc...) asparagine). Residues threonine 208 and threonine 224 are each glycosylated (O-linked (GalNAc...) threonine). Residues 220–239 (QPEPTRSQPMDQEPGPSQTP) are compositionally biased toward polar residues. Residues 220-241 (QPEPTRSQPMDQEPGPSQTPHI) are disordered. A helical transmembrane segment spans residues 259 to 288 (ISLPIGLIVGLTTLGLLMLGLANCFILVQR). Topologically, residues 289–474 (KKKPSCLQRE…WYDQIAVKVP (186 aa)) are cytoplasmic. Disordered stretches follow at residues 321–378 (LTTA…GSHG) and 397–464 (SQCS…NQPG). Low complexity-rich tracts occupy residues 324–338 (APSS…SASA) and 366–378 (GSRS…GSHG). Serine 331 carries the phosphoserine modification. A compositionally biased stretch (polar residues) spans 429-442 (ECPSQSQWETTETL).

As to quaternary structure, binds to TRAF2. Interacts with BMX. Interacts (activated form) with XPNPEP3.

The protein resides in the membrane. Its function is as follows. Receptor with high affinity for TNFSF2/TNF-alpha and approximately 5-fold lower affinity for homotrimeric TNFSF1/lymphotoxin-alpha. The TRAF1/TRAF2 complex recruits the apoptotic suppressors BIRC2 and BIRC3 to TNFRSF1B/TNFR2. This is Tumor necrosis factor receptor superfamily member 1B (Tnfrsf1b) from Rattus norvegicus (Rat).